The sequence spans 83 residues: Large ribosomal subunit protein bL31B (83 aa).

This sequence belongs to the bacterial ribosomal protein bL31 family. Type B subfamily. Part of the 50S ribosomal subunit.

This is Large ribosomal subunit protein bL31B from Lacticaseibacillus casei (strain BL23) (Lactobacillus casei).